The chain runs to 360 residues: MRLLERLWGKKPSRKSDKKKKGTSNYAYAVTRVRAMKSKLLPKETYPRLLNMGIDEITRFIQESEYKNDVDELAMKYSGGDLAEHALNRNLALTYDKLLRITSGELNYLIAAYLLRYDIWNVKTLLRGKLYNASVEDILESLISAGEFTYTFLSELAAKATYQEIIDALKETDYYPLLQEFDGNNLAYIENELDKMYYSSLFAAIGKPRSKDRKLFARFIKLEVDVKNLGTLFRLKKAGVEKSDEIMPLMIEGGLELKPEKLATLPYEQFIDELRKTQYWDAIATVTGLETASLTIVESRLIRYYLESATTYSHVSPISIVPIMEYIIHKNNEVNNLRIIFRGKEADLSDTLIKDQLVVI.

A disordered region spans residues 1-23; sequence MRLLERLWGKKPSRKSDKKKKGT. The span at 9–22 shows a compositional bias: basic residues; it reads GKKPSRKSDKKKKG.

It belongs to the V-ATPase V0D/AC39 subunit family. In terms of assembly, has multiple subunits with at least A(3), B(3), C, D, E, F, H, I and proteolipid K(x).

The protein localises to the cell membrane. Functionally, component of the A-type ATP synthase that produces ATP from ADP in the presence of a proton gradient across the membrane. This chain is A-type ATP synthase subunit C, found in Methanosarcina acetivorans (strain ATCC 35395 / DSM 2834 / JCM 12185 / C2A).